We begin with the raw amino-acid sequence, 448 residues long: Trigger factor (448 aa).

The 87-residue stretch at 167 to 253 (GSIVRVDFVE…VKDIKRRDIP (87 aa)) folds into the PPIase FKBP-type domain.

The protein belongs to the FKBP-type PPIase family. Tig subfamily.

Its subcellular location is the cytoplasm. It carries out the reaction [protein]-peptidylproline (omega=180) = [protein]-peptidylproline (omega=0). Its function is as follows. Involved in protein export. Acts as a chaperone by maintaining the newly synthesized protein in an open conformation. Functions as a peptidyl-prolyl cis-trans isomerase. This chain is Trigger factor, found in Borrelia recurrentis (strain A1).